The primary structure comprises 221 residues: Octanoyltransferase (221 aa).

A BPL/LPL catalytic domain is found at P40 to L218. Residues R82–H89, A149–G151, and G162–A164 contribute to the substrate site. C180 functions as the Acyl-thioester intermediate in the catalytic mechanism.

Belongs to the LipB family.

It localises to the cytoplasm. It carries out the reaction octanoyl-[ACP] + L-lysyl-[protein] = N(6)-octanoyl-L-lysyl-[protein] + holo-[ACP] + H(+). It functions in the pathway protein modification; protein lipoylation via endogenous pathway; protein N(6)-(lipoyl)lysine from octanoyl-[acyl-carrier-protein]: step 1/2. In terms of biological role, catalyzes the transfer of endogenously produced octanoic acid from octanoyl-acyl-carrier-protein onto the lipoyl domains of lipoate-dependent enzymes. Lipoyl-ACP can also act as a substrate although octanoyl-ACP is likely to be the physiological substrate. The chain is Octanoyltransferase from Nostoc sp. (strain PCC 7120 / SAG 25.82 / UTEX 2576).